We begin with the raw amino-acid sequence, 450 residues long: MARLGALVCCLLAAWHCRPGLGLPLAPAGTGPAVGQFWHVTDFHLDPTYHITGDHTKVCASSKGAEASDPGPFGDVMCDSPYRLIFSALDFIKNSGQKVSFMIWTGDSPPHVPVLELSTDKVINVTANITTTIQRLFPNLQVFPALGNHDYWPQDQLPVVNSKVYNAVANLWKPWLTEDAITTLRKGGFYTQKVSNNPKLRIISLNTNLYYGPNSVTLNQTDPANQFEWLENTLNISQQNKEKVYIIAHVPVGYLPYARGISAMRKYHNEKLIDIFRKYSDIIAGQFYGHTHRDSIMVLSDKKGKPVNSLFVAPAVTPVRSVLERLTNNPGVRLFQYDPRDYKLLDMLQYYLNLTDANLKGESNWKLEYNLTQAYDIQDLQPKSLYKLAKQFAIQESKQFIKYYKYFFVSYDSSVICQGKCKIFQICAIMNLDVISYTDCFRQYHMKHRL.

The signal sequence occupies residues 1–22 (MARLGALVCCLLAAWHCRPGLG). Residues Asp-42 and His-44 each coordinate Zn(2+). Residues Cys-59 and Cys-78 are joined by a disulfide bond. Asp-107 is a binding site for Zn(2+). His-111 is a binding site for ATP. N-linked (GlcNAc...) asparagine glycosylation is found at Asn-124 and Asn-128. Asn-148 provides a ligand contact to Zn(2+). Positions 148 and 149 each coordinate ATP. N-linked (GlcNAc...) asparagine glycosylation is found at Asn-219 and Asn-235. Residues His-249, His-290, and His-292 each contribute to the Zn(2+) site. Asn-353 and Asn-370 each carry an N-linked (GlcNAc...) asparagine glycan. Disulfide bonds link Cys-417-Cys-421 and Cys-427-Cys-440.

This sequence belongs to the acid sphingomyelinase family. As to quaternary structure, monomer. Homodimer; homodimerizes following 2',3'-cGAMP-binding. Zn(2+) serves as cofactor.

It is found in the secreted. It catalyses the reaction 2',3'-cGAMP + H2O = 5'-pGpA(2'-5') + H(+). The enzyme catalyses 5'-pGpA(2'-5') + H2O = 5'-GpA(2'-5') + phosphate. The catalysed reaction is a ribonucleoside 5'-triphosphate + H2O = a ribonucleoside 5'-diphosphate + phosphate + H(+). It carries out the reaction ATP + H2O = ADP + phosphate + H(+). Functionally, cyclic-nucleotide phosphodiesterase that acts as a negative regulator of innate immunity by mediating degradation of 2',3'-cGAMP, thereby inhibiting the cGAS-STING signaling. Specifically linearizes 2',3'-cGAMP into 2'5'-bond pGpA and further hydrolyzes pGpA to produce GpA. Also has in vitro nucleotide phosphodiesterase activity with nucleoside triphosphates, such as ATP. Has in vitro activity with p-nitrophenyl-TMP. Has lower activity with nucleoside diphosphates, and no activity with nucleoside monophosphates. Has in vitro activity with CDP-choline, giving rise to CMP and phosphocholine. Has in vitro activity with CDP-ethanolamine. Does not have sphingomyelin phosphodiesterase activity. This chain is Cyclic GMP-AMP phosphodiesterase SMPDL3A (SMPDL3A), found in Bos taurus (Bovine).